The following is a 920-amino-acid chain: MARKSFPSGQIIPTDLHEEMERSYLEYAMSVIVGRALPDVRDGLKPVHRRILYAMYELGLTPDRPFRKCARVVGDVLGKYHPHGDQSVYDALVRMVQDFSSRYPLLAGHGNFGSVDNDPPAAMRYTETRLAPIAMGAMLEGISEAIVDFTGNFDNSQEEPTVVPAQLPLLLLNGCSGIAVGMATSIPPHNLGEVVDGLIGLINKPDLSDQELFKLIPGPDFPTGGHILDSEGILQAYQTGRGLIPVRGVSHIETIRGEKKRSHNRTAIVITELPFQVNKAAWIEKIASLVNDGKLDGISDLRDESDRTGMRVVIELKRDAEPNAILQKLYRMTPLQSNFGVIFLALVNNQPVQMSLRQILQEFLQFREDTLLRQYENELGENRRRLELLTGLLIGLENLDALIEILRFAADGTTAKIQLQERLGISLQQGDAILGMPMRRITGLEREKLQQEHTDLAQRIEQLETLIGDRQERLKALKKELRGLKKKFADERRTKILQGMPAKIEPLPVNQDPLPEATIPPVESQSAPEEELDSPGEPEQEQLVLENSSPPTADSAPEAKQDDLNLAVKPTPKTVKQEAQPSPEVIATHSKLVSVAEKNPLTLFTPQTPPAEAFLSINLQGEIAWHPEELTSANSFEPLDQQFSIQGRETLIVIGDHGKAFPVAIADIPPLAVTRIPLLQILPKSAQRDATTVTFQGFLPPPEQPQDLLLVSQQGRVKLLAGQELQELGPRGLSLMKLKNGDLLQFAQLVTPVNPASAQNPGKNLVIATSNGRLLRFDPAQVGLTCSSPSAQGQEAMRLRATESLVGVLMASPGDRVLLLTQAGYGKQLDLASVRLGNFGELGTTVMQFTSKADRLLTMVAANQGAQSPQSSTYDFYSNQQRLHSVQADQFQPWGKDGFGDRLVDLNEGEHLITQVAHLG.

Residues 37–509 (LPDVRDGLKP…MPAKIEPLPV (473 aa)) enclose the Topo IIA-type catalytic domain. Catalysis depends on Tyr-125, which acts as the O-(5'-phospho-DNA)-tyrosine intermediate. The segment at 499–566 (GMPAKIEPLP…PEAKQDDLNL (68 aa)) is disordered. A compositionally biased stretch (acidic residues) spans 528 to 540 (PEEELDSPGEPEQ).

It belongs to the type II topoisomerase GyrA/ParC subunit family. As to quaternary structure, heterotetramer composed of ParC and ParE.

The protein resides in the cell membrane. The enzyme catalyses ATP-dependent breakage, passage and rejoining of double-stranded DNA.. Its function is as follows. Topoisomerase IV is essential for chromosome segregation. It relaxes supercoiled DNA. Performs the decatenation events required during the replication of a circular DNA molecule. The polypeptide is DNA topoisomerase 4 subunit A (parC) (Synechocystis sp. (strain ATCC 27184 / PCC 6803 / Kazusa)).